Here is a 373-residue protein sequence, read N- to C-terminus: Protein U3 (373 aa).

Belongs to the herpesviridae US22 family.

This chain is Protein U3 (U3), found in Human herpesvirus 6A (strain Uganda-1102) (HHV-6 variant A).